We begin with the raw amino-acid sequence, 246 residues long: UDP-N-acetyl-D-mannosaminuronic acid transferase (246 aa).

It belongs to the glycosyltransferase 26 family.

It catalyses the reaction UDP-N-acetyl-alpha-D-mannosaminouronate + N-acetyl-alpha-D-glucosaminyl-di-trans,octa-cis-undecaprenyl diphosphate = beta-D-ManNAcA-(1-&gt;4)-alpha-D-GlcNAc-di-trans,octa-cis-undecaprenyl diphosphate + UDP + H(+). The protein operates within bacterial outer membrane biogenesis; enterobacterial common antigen biosynthesis. Its function is as follows. Catalyzes the synthesis of Und-PP-GlcNAc-ManNAcA (Lipid II), the second lipid-linked intermediate involved in enterobacterial common antigen (ECA) synthesis. The sequence is that of UDP-N-acetyl-D-mannosaminuronic acid transferase from Shigella flexneri.